We begin with the raw amino-acid sequence, 372 residues long: Germination protease (372 aa).

Residues 1–15 (MNRSIDLSMYSVRTD) constitute a propeptide that is removed on maturation.

The protein belongs to the peptidase A25 family. Homotetramer. Autoproteolytically processed. The inactive tetrameric zymogen termed p46 autoprocesses to a smaller form termed p41, which is active only during spore germination.

The enzyme catalyses Endopeptidase action with P4 Glu or Asp, P1 preferably Glu &gt; Asp, P1' hydrophobic and P2' Ala.. In terms of biological role, initiates the rapid degradation of small, acid-soluble proteins during spore germination. The sequence is that of Germination protease from Geobacillus sp. (strain WCH70).